Here is a 532-residue protein sequence, read N- to C-terminus: Glucose-6-phosphate isomerase (532 aa).

Glu330 serves as the catalytic Proton donor. Active-site residues include His359 and Lys461.

This sequence belongs to the GPI family.

The protein localises to the cytoplasm. The catalysed reaction is alpha-D-glucose 6-phosphate = beta-D-fructose 6-phosphate. The protein operates within carbohydrate biosynthesis; gluconeogenesis. Its pathway is carbohydrate degradation; glycolysis; D-glyceraldehyde 3-phosphate and glycerone phosphate from D-glucose: step 2/4. In terms of biological role, catalyzes the reversible isomerization of glucose-6-phosphate to fructose-6-phosphate. The protein is Glucose-6-phosphate isomerase of Synechococcus sp. (strain CC9902).